Consider the following 317-residue polypeptide: Acetyl-coenzyme A carboxylase carboxyl transferase subunit alpha (317 aa).

In terms of domain architecture, CoA carboxyltransferase C-terminal spans Thr38 to Glu292.

The protein belongs to the AccA family. As to quaternary structure, acetyl-CoA carboxylase is a heterohexamer composed of biotin carboxyl carrier protein (AccB), biotin carboxylase (AccC) and two subunits each of ACCase subunit alpha (AccA) and ACCase subunit beta (AccD).

It localises to the cytoplasm. The enzyme catalyses N(6)-carboxybiotinyl-L-lysyl-[protein] + acetyl-CoA = N(6)-biotinyl-L-lysyl-[protein] + malonyl-CoA. The protein operates within lipid metabolism; malonyl-CoA biosynthesis; malonyl-CoA from acetyl-CoA: step 1/1. Functionally, component of the acetyl coenzyme A carboxylase (ACC) complex. First, biotin carboxylase catalyzes the carboxylation of biotin on its carrier protein (BCCP) and then the CO(2) group is transferred by the carboxyltransferase to acetyl-CoA to form malonyl-CoA. This is Acetyl-coenzyme A carboxylase carboxyl transferase subunit alpha from Oceanobacillus iheyensis (strain DSM 14371 / CIP 107618 / JCM 11309 / KCTC 3954 / HTE831).